The primary structure comprises 314 residues: Mycothiol acetyltransferase (314 aa).

2 consecutive N-acetyltransferase domains span residues 18–156 and 168–314; these read ATIR…RPLA and IRIA…MYQL. Residue E38 coordinates 1D-myo-inositol 2-(L-cysteinylamino)-2-deoxy-alpha-D-glucopyranoside. An acetyl-CoA-binding site is contributed by 92 to 94; sequence VVV. Residues E195, K234, and E248 each coordinate 1D-myo-inositol 2-(L-cysteinylamino)-2-deoxy-alpha-D-glucopyranoside. Acetyl-CoA-binding positions include 252-254 and 259-265; these read VGL and QGHGLGR. Y286 provides a ligand contact to 1D-myo-inositol 2-(L-cysteinylamino)-2-deoxy-alpha-D-glucopyranoside.

The protein belongs to the acetyltransferase family. MshD subfamily. Monomer.

The catalysed reaction is 1D-myo-inositol 2-(L-cysteinylamino)-2-deoxy-alpha-D-glucopyranoside + acetyl-CoA = mycothiol + CoA + H(+). In terms of biological role, catalyzes the transfer of acetyl from acetyl-CoA to desacetylmycothiol (Cys-GlcN-Ins) to form mycothiol. The polypeptide is Mycothiol acetyltransferase (Catenulispora acidiphila (strain DSM 44928 / JCM 14897 / NBRC 102108 / NRRL B-24433 / ID139908)).